Consider the following 149-residue polypeptide: Large ribosomal subunit protein uL22 (149 aa).

It belongs to the universal ribosomal protein uL22 family. As to quaternary structure, part of the 50S ribosomal subunit.

Its function is as follows. This protein binds specifically to 23S rRNA. It makes multiple contacts with different domains of the 23S rRNA in the assembled 50S subunit and ribosome. In terms of biological role, the globular domain of the protein is located near the polypeptide exit tunnel on the outside of the subunit, while an extended beta-hairpin is found that lines the wall of the exit tunnel in the center of the 70S ribosome. The chain is Large ribosomal subunit protein uL22 from Picrophilus torridus (strain ATCC 700027 / DSM 9790 / JCM 10055 / NBRC 100828 / KAW 2/3).